Reading from the N-terminus, the 231-residue chain is Nucleoside diphosphate kinase II, chloroplastic (231 aa).

Residues 1 to 62 (MVGATVVSKW…RNSASRRRLR (62 aa)) constitute a chloroplast transit peptide. The ATP site is built by lysine 91, phenylalanine 139, arginine 167, threonine 173, arginine 184, and asparagine 194. The Pros-phosphohistidine intermediate role is filled by histidine 197.

The protein belongs to the NDK family. As to quaternary structure, interacts with PHYA, MPK3 and MPK6. It depends on Mg(2+) as a cofactor. In terms of processing, autophosphorylated.

It localises to the plastid. It is found in the chloroplast. It catalyses the reaction a 2'-deoxyribonucleoside 5'-diphosphate + ATP = a 2'-deoxyribonucleoside 5'-triphosphate + ADP. It carries out the reaction a ribonucleoside 5'-diphosphate + ATP = a ribonucleoside 5'-triphosphate + ADP. Major role in the synthesis of nucleoside triphosphates other than ATP. The ATP gamma phosphate is transferred to the NDP beta phosphate via a ping-pong mechanism, using a phosphorylated active-site intermediate. May activate MPK3 and MPK6. May be involved in the regulation of cellular redox state and hydrogen peroxide-mediated MAP kinase signaling. The sequence is that of Nucleoside diphosphate kinase II, chloroplastic (NDPK2) from Arabidopsis thaliana (Mouse-ear cress).